Here is a 291-residue protein sequence, read N- to C-terminus: uncharacterized protein (291 aa).

Positions 68 to 205 (PVAVSASFLW…VIQLWARPRG (138 aa)) constitute a DAGKc domain.

This is an uncharacterized protein from Mycobacterium tuberculosis (strain CDC 1551 / Oshkosh).